The chain runs to 51 residues: Insulin (51 aa).

Cystine bridges form between cysteine 7–cysteine 37, cysteine 19–cysteine 50, and cysteine 36–cysteine 41.

This sequence belongs to the insulin family. As to quaternary structure, heterodimer of a B chain and an A chain linked by two disulfide bonds.

It localises to the secreted. Insulin decreases blood glucose concentration. It increases cell permeability to monosaccharides, amino acids and fatty acids. It accelerates glycolysis, the pentose phosphate cycle, and glycogen synthesis in liver. The sequence is that of Insulin (INS) from Camelus dromedarius (Dromedary).